Reading from the N-terminus, the 141-residue chain is Hemoglobin subunit alpha-D (141 aa).

The 141-residue stretch at 1 to 141 (MLTAEDKKLI…VAAVLAEKYR (141 aa)) folds into the Globin domain. Residues His58 and His87 each coordinate heme b.

The protein belongs to the globin family. In terms of assembly, heterotetramer of two alpha-D chains and two beta chains. As to expression, red blood cells.

Functionally, involved in oxygen transport from the lung to the various peripheral tissues. The chain is Hemoglobin subunit alpha-D (HBAD) from Apus apus (Common swift).